A 339-amino-acid polypeptide reads, in one-letter code: tRNA pseudouridine synthase B (339 aa).

The Nucleophile role is filled by aspartate 40. An RPE1 insert domain is found at 262–307; it reads FRRLSKFAYREEFEENTERSTAAYTLVREDANTGLTYKLPLEVELS.

The protein belongs to the pseudouridine synthase TruB family. Type 1 subfamily.

It carries out the reaction uridine(55) in tRNA = pseudouridine(55) in tRNA. Functionally, responsible for synthesis of pseudouridine from uracil-55 in the psi GC loop of transfer RNAs. This Rickettsia felis (strain ATCC VR-1525 / URRWXCal2) (Rickettsia azadi) protein is tRNA pseudouridine synthase B.